Here is a 53-residue protein sequence, read N- to C-terminus: Neuronal protein NP-190 (53 aa).

Mainly expressed in the fetal brain where it is specifically localized to the proximal axonal segments, cell bodies and growth cones. Lower level of expression was also detected in the fetal heart and the skeletal muscle. No expression in kidney, liver, lung or spleen.

The protein localises to the membrane. Functionally, neuronal antigen that may play a role in brain development. May be involved in neurite formation or axonal guidance. This Sus scrofa (Pig) protein is Neuronal protein NP-190.